The sequence spans 589 residues: uncharacterized protein (589 aa).

A run of 14 helical transmembrane segments spans residues 90-110 (YIVI…QTVI), 128-148 (SWIG…CGIM), 162-182 (IVLF…LWLV), 189-209 (GIGG…ITPL), 217-237 (GCMG…GGAI), 245-265 (WIFF…IFFL), 284-304 (FVGI…LNIG), 311-331 (AHAN…GFVV), 355-375 (VMVT…YIPI), 390-410 (VHTL…GMGI), 418-438 (YPMI…IAIY), 448-468 (GFLA…LIAI), 483-503 (AFML…AVIY), and 545-565 (IRTI…LSFF).

This sequence belongs to the major facilitator superfamily. TCR/Tet family.

The protein resides in the membrane. This is an uncharacterized protein from Schizosaccharomyces pombe (strain 972 / ATCC 24843) (Fission yeast).